A 327-amino-acid polypeptide reads, in one-letter code: GTPase Obg (327 aa).

The 159-residue stretch at 1–159 folds into the Obg domain; sequence MQFIDQANII…WEVQLELKLL (159 aa). In terms of domain architecture, OBG-type G spans 160–327; that stretch reads AEVGIIGLPN…SLLFEVWKRI (168 aa). Residues 166–173, 191–195, 213–216, 280–283, and 309–311 each bind ATP; these read GLPNAGKS, FTTLI, DIPG, NKME, and SSS. Positions 173 and 193 each coordinate Mg(2+).

It belongs to the TRAFAC class OBG-HflX-like GTPase superfamily. OBG GTPase family. Monomer. Requires Mg(2+) as cofactor.

Its subcellular location is the cytoplasm. In terms of biological role, an essential GTPase which binds GTP, GDP and possibly (p)ppGpp with moderate affinity, with high nucleotide exchange rates and a fairly low GTP hydrolysis rate. Plays a role in control of the cell cycle, stress response, ribosome biogenesis and in those bacteria that undergo differentiation, in morphogenesis control. This chain is GTPase Obg, found in Prochlorococcus marinus (strain MIT 9312).